The sequence spans 270 residues: MLRKVFYISDGTAITAEVFGHAVLSQFPLEFDALTIPFVETEKKAEAVKAQINDCFITTGERPLVFHSIVKAEIRDIIYSSEGLDYDFLNTFVAPLEKQLGMPATPALHRTHGKTNDSYEARIEAINYAMENDDGQTMKHMDKADLILLGVSRCGKTPSSLYLSMQFGIKAANYPFTEDDMDNLKLPDALKRNKDKLFGLTIDPVRLHEIRQSRMSNSRYSSMRQCRMEVKEVEMMYKRERIPFVNTTNHSVEEIATKILEATSLERHMF.

150-157 provides a ligand contact to ADP; that stretch reads GVSRCGKT.

The protein belongs to the pyruvate, phosphate/water dikinase regulatory protein family. PSRP subfamily.

The catalysed reaction is [pyruvate, water dikinase] + ADP = [pyruvate, water dikinase]-phosphate + AMP + H(+). It carries out the reaction [pyruvate, water dikinase]-phosphate + phosphate + H(+) = [pyruvate, water dikinase] + diphosphate. Its function is as follows. Bifunctional serine/threonine kinase and phosphorylase involved in the regulation of the phosphoenolpyruvate synthase (PEPS) by catalyzing its phosphorylation/dephosphorylation. The chain is Putative phosphoenolpyruvate synthase regulatory protein from Shewanella piezotolerans (strain WP3 / JCM 13877).